Reading from the N-terminus, the 211-residue chain is Large ribosomal subunit protein uL3 (211 aa).

Belongs to the universal ribosomal protein uL3 family. Part of the 50S ribosomal subunit. Forms a cluster with proteins L14 and L19.

One of the primary rRNA binding proteins, it binds directly near the 3'-end of the 23S rRNA, where it nucleates assembly of the 50S subunit. This Desulfatibacillum aliphaticivorans protein is Large ribosomal subunit protein uL3.